Consider the following 235-residue polypeptide: Ribitol-5-phosphate cytidylyltransferase (235 aa).

CTP contacts are provided by residues 7-10 (LAGG), 82-88 (GADRNTS), and Ser-113.

The protein belongs to the IspD/TarI cytidylyltransferase family. TarI subfamily.

The enzyme catalyses D-ribitol 5-phosphate + CTP + H(+) = CDP-L-ribitol + diphosphate. It participates in cell wall biogenesis; poly(ribitol phosphate) teichoic acid biosynthesis. Functionally, catalyzes the transfer of the cytidylyl group of CTP to D-ribitol 5-phosphate. This Streptococcus pneumoniae (strain CGSP14) protein is Ribitol-5-phosphate cytidylyltransferase.